We begin with the raw amino-acid sequence, 367 residues long: Aminomethyltransferase (367 aa).

It belongs to the GcvT family. As to quaternary structure, the glycine cleavage system is composed of four proteins: P, T, L and H.

It carries out the reaction N(6)-[(R)-S(8)-aminomethyldihydrolipoyl]-L-lysyl-[protein] + (6S)-5,6,7,8-tetrahydrofolate = N(6)-[(R)-dihydrolipoyl]-L-lysyl-[protein] + (6R)-5,10-methylene-5,6,7,8-tetrahydrofolate + NH4(+). Its function is as follows. The glycine cleavage system catalyzes the degradation of glycine. The polypeptide is Aminomethyltransferase (Parasynechococcus marenigrum (strain WH8102)).